The chain runs to 467 residues: Probable glutamate decarboxylase gamma (467 aa).

Lys278 bears the N6-(pyridoxal phosphate)lysine mark.

Belongs to the group II decarboxylase family. Pyridoxal 5'-phosphate is required as a cofactor.

The catalysed reaction is L-glutamate + H(+) = 4-aminobutanoate + CO2. The sequence is that of Probable glutamate decarboxylase gamma from Listeria monocytogenes serovar 1/2a (strain ATCC BAA-679 / EGD-e).